Here is a 476-residue protein sequence, read N- to C-terminus: Glycogen synthase (476 aa).

K15 contributes to the ADP-alpha-D-glucose binding site.

The protein belongs to the glycosyltransferase 1 family. Bacterial/plant glycogen synthase subfamily.

It catalyses the reaction [(1-&gt;4)-alpha-D-glucosyl](n) + ADP-alpha-D-glucose = [(1-&gt;4)-alpha-D-glucosyl](n+1) + ADP + H(+). It functions in the pathway glycan biosynthesis; glycogen biosynthesis. Functionally, synthesizes alpha-1,4-glucan chains using ADP-glucose. This chain is Glycogen synthase, found in Ligilactobacillus salivarius (strain UCC118) (Lactobacillus salivarius).